The sequence spans 246 residues: Small ribosomal subunit protein uS2 (246 aa).

This sequence belongs to the universal ribosomal protein uS2 family.

The chain is Small ribosomal subunit protein uS2 from Burkholderia pseudomallei (strain 668).